Here is a 181-residue protein sequence, read N- to C-terminus: Sodium/potassium-transporting ATPase subunit beta-1-interacting protein 3 (181 aa).

4 helical membrane passes run 2 to 22 (GCCT…LSAL), 35 to 55 (APIL…FGTI), 62 to 82 (IMVY…IICF), and 152 to 172 (VQIL…SISM).

Belongs to the NKAIN family. In terms of assembly, interacts with ATP1B1. As to expression, detected in the brain only and specifically in neurons. Expressed in multiple regions such as cerebral cortex, thalamus, hippocampus, olfactory bulb and brainstem as well as in cerebellum with low expression in granular cell layer.

The protein localises to the cell membrane. This chain is Sodium/potassium-transporting ATPase subunit beta-1-interacting protein 3 (Nkain3), found in Mus musculus (Mouse).